The chain runs to 249 residues: Diphthine synthase (249 aa).

Residues D83, L86, 111 to 112 (SI), L163, and L205 each bind S-adenosyl-L-methionine.

This sequence belongs to the diphthine synthase family. Homodimer.

The catalysed reaction is 2-[(3S)-amino-3-carboxypropyl]-L-histidyl-[translation elongation factor 2] + 3 S-adenosyl-L-methionine = diphthine-[translation elongation factor 2] + 3 S-adenosyl-L-homocysteine + 3 H(+). The protein operates within protein modification; peptidyl-diphthamide biosynthesis. Functionally, S-adenosyl-L-methionine-dependent methyltransferase that catalyzes the trimethylation of the amino group of the modified target histidine residue in translation elongation factor 2 (EF-2), to form an intermediate called diphthine. The three successive methylation reactions represent the second step of diphthamide biosynthesis. This chain is Diphthine synthase, found in Pyrobaculum islandicum (strain DSM 4184 / JCM 9189 / GEO3).